We begin with the raw amino-acid sequence, 128 residues long: Small ribosomal subunit protein uS12 (128 aa).

Residues 1 to 29 (MPTINQLIRKGREPKERKSKSPALMGNPQ) form a disordered region. Asp89 carries the 3-methylthioaspartic acid modification. The segment at 106–128 (GVEGRRQGRSKYGAKRPKEGGKK) is disordered.

The protein belongs to the universal ribosomal protein uS12 family. Part of the 30S ribosomal subunit. Contacts proteins S8 and S17. May interact with IF1 in the 30S initiation complex.

Its function is as follows. With S4 and S5 plays an important role in translational accuracy. Interacts with and stabilizes bases of the 16S rRNA that are involved in tRNA selection in the A site and with the mRNA backbone. Located at the interface of the 30S and 50S subunits, it traverses the body of the 30S subunit contacting proteins on the other side and probably holding the rRNA structure together. The combined cluster of proteins S8, S12 and S17 appears to hold together the shoulder and platform of the 30S subunit. This chain is Small ribosomal subunit protein uS12, found in Dictyoglomus turgidum (strain DSM 6724 / Z-1310).